Consider the following 326-residue polypeptide: Probable UDP-3-O-acyl-N-acetylglucosamine deacetylase 2, mitochondrial (326 aa).

Residues 1–21 constitute a mitochondrion transit peptide; the sequence is MRLPVTVKATKPSFLVIWIRY. Zn(2+)-binding residues include histidine 109, histidine 281, and aspartate 285.

The protein belongs to the LpxC family. It depends on Zn(2+) as a cofactor.

The protein localises to the mitochondrion. The catalysed reaction is a UDP-3-O-[(3R)-3-hydroxyacyl]-N-acetyl-alpha-D-glucosamine + H2O = a UDP-3-O-[(3R)-3-hydroxyacyl]-alpha-D-glucosamine + acetate. It participates in glycolipid biosynthesis; lipid IV(A) biosynthesis; lipid IV(A) from (3R)-3-hydroxytetradecanoyl-[acyl-carrier-protein] and UDP-N-acetyl-alpha-D-glucosamine: step 2/6. Its function is as follows. Involved in the biosynthesis of lipid A, a phosphorylated glycolipid that in bacteria anchors the lipopolysaccharide to the outer membrane of the cell. Lipid A-like molecules in plants may serve as structural components of the outer membranes of mitochondria and/or chloroplasts, or may be involved in signal transduction or plant defense responses (Potential). The chain is Probable UDP-3-O-acyl-N-acetylglucosamine deacetylase 2, mitochondrial (LPXC2) from Arabidopsis thaliana (Mouse-ear cress).